The sequence spans 201 residues: Adenylyl-sulfate kinase (201 aa).

35–42 (GLSGSGKS) serves as a coordination point for ATP. Catalysis depends on Ser109, which acts as the Phosphoserine intermediate.

It belongs to the APS kinase family.

The enzyme catalyses adenosine 5'-phosphosulfate + ATP = 3'-phosphoadenylyl sulfate + ADP + H(+). It functions in the pathway sulfur metabolism; hydrogen sulfide biosynthesis; sulfite from sulfate: step 2/3. Catalyzes the synthesis of activated sulfate. This Shigella flexneri protein is Adenylyl-sulfate kinase.